The sequence spans 1210 residues: Inner capsid protein VP3 (1210 aa).

The disordered stretch occupies residues Met1–Thr28. Residues Leu113–His136 form a C2H2-type zinc finger. Positions Pro294 to Pro319 are disordered. Low complexity predominate over residues Gln299–Ser315.

Belongs to the turreted BTV-fold inner capsid family. In terms of assembly, homodecamer; each decamer is made up of two conformers of VP2, called VP2A and VP2B. 12 homodecamers assemble to form an icosahedral capsid. Interacts with VP6.

It is found in the virion. Inner capsid protein that self-assembles to form an icosahedral capsid with a T=2 symmetry, which consists of 120 copies of VP2, with channels at each of its five-fold vertices. This capsid constitutes the innermost concentric layer of the viral mature particle. The chain is Inner capsid protein VP3 (S3) from Aquareovirus A (isolate Chum salmon/Japan/CSRV/1981) (AQRV-A).